We begin with the raw amino-acid sequence, 724 residues long: Propionyl-CoA carboxylase alpha chain, mitochondrial (724 aa).

The Biotin carboxylation domain occupies 48-495 (KFDKILIANR…TTKYLPEVYP (448 aa)). ATP contacts are provided by residues K163, 195–256 (SRDI…PRHI), E247, and N282. The ATP-grasp domain occupies 167–364 (KKIATAARVS…IVQQMLRVSY (198 aa)). Positions 322, 335, and 337 each coordinate Mg(2+). The Mn(2+) site is built by E322, E335, and N337. The active site involves R339. Residue F395 coordinates biotin. Positions 649–724 (KAKVDLSTVV…DEGEVLVELE (76 aa)) constitute a Biotinyl-binding domain. K690 is subject to N6-biotinyllysine.

The holoenzyme is a dodecamer composed of 6 alpha subunits and 6 beta subunits. Interacts with sir-2.2 and sir-2.3. The cofactor is biotin. Mg(2+) is required as a cofactor. It depends on Mn(2+) as a cofactor. In terms of processing, the biotin cofactor is covalently attached to the C-terminal biotinyl-binding domain and is required for the catalytic activity.

Its subcellular location is the mitochondrion matrix. It carries out the reaction propanoyl-CoA + hydrogencarbonate + ATP = (S)-methylmalonyl-CoA + ADP + phosphate + H(+). The catalysed reaction is butanoyl-CoA + hydrogencarbonate + ATP = (2S)-ethylmalonyl-CoA + ADP + phosphate + H(+). The protein operates within metabolic intermediate metabolism; propanoyl-CoA degradation; succinyl-CoA from propanoyl-CoA: step 1/3. Its function is as follows. This is one of the 2 subunits of the biotin-dependent propionyl-CoA carboxylase (PCC), a mitochondrial enzyme involved in the catabolism of odd chain fatty acids, branched-chain amino acids isoleucine, threonine, methionine, and valine and other metabolites. Propionyl-CoA carboxylase catalyzes the carboxylation of propionyl-CoA/propanoyl-CoA to D-methylmalonyl-CoA/(S)-methylmalonyl-CoA. Within the holoenzyme, the alpha subunit catalyzes the ATP-dependent carboxylation of the biotin carried by the biotin carboxyl carrier (BCC) domain, while the beta subunit then transfers the carboxyl group from carboxylated biotin to propionyl-CoA. Propionyl-CoA carboxylase also significantly acts on butyryl-CoA/butanoyl-CoA, which is converted to ethylmalonyl-CoA/(2S)-ethylmalonyl-CoA. Other alternative minor substrates include (2E)-butenoyl-CoA/crotonoyl-CoA. The sequence is that of Propionyl-CoA carboxylase alpha chain, mitochondrial (pcca-1) from Caenorhabditis elegans.